The chain runs to 375 residues: Putrescine N-methyltransferase 1 (375 aa).

Polar residues-rich tracts occupy residues 24–50 (HQNG…QNGT) and 57–77 (HQNG…GNEL). The tract at residues 24 to 77 (HQNGTSEHLNGYQNGTSKHQNGHQNGTFEHRNGHQNGTSEQQNGTISHDNGNEL) is disordered. A PABS domain is found at 86 to 323 (PGWFSEFSAL…GVIGYMLCST (238 aa)). S-adenosyl-L-methionine-binding positions include Q117, E192, and 223–224 (DG). Catalysis depends on D242, which acts as the Proton acceptor. Y311 serves as a coordination point for S-adenosyl-L-methionine.

The protein belongs to the class I-like SAM-binding methyltransferase superfamily. Putrescine methyltransferase family. Predominantly expressed in roots.

The enzyme catalyses putrescine + S-adenosyl-L-methionine = N-methylputrescine + S-adenosyl-L-homocysteine + H(+). The protein operates within alkaloid biosynthesis; nicotine biosynthesis. Functionally, involved in the biosynthesis of pyridine alkaloid natural products, leading mainly to the production of anabasine, anatabine, nicotine and nornicotine, effective deterrents against herbivores with antiparasitic and pesticide properties (neurotoxins); nornicotine serves as the precursor in the synthesis of the carcinogen compound N'-nitrosonornicotine (NNN). Methyltransferase that mediates the conversion of putrescine to N-methylputrescine. Promotes leaves ripening. This chain is Putrescine N-methyltransferase 1, found in Nicotiana tabacum (Common tobacco).